Here is a 168-residue protein sequence, read N- to C-terminus: Phosphopantetheine adenylyltransferase (168 aa).

Thr14 contributes to the substrate binding site. ATP is bound by residues 14–15 and His22; that span reads TF. 3 residues coordinate substrate: Lys46, Leu78, and Arg92. ATP-binding positions include 93-95, Glu103, and 128-134; these read GLR and YSFISSS.

This sequence belongs to the bacterial CoaD family. Homohexamer. Mg(2+) serves as cofactor.

The protein resides in the cytoplasm. The enzyme catalyses (R)-4'-phosphopantetheine + ATP + H(+) = 3'-dephospho-CoA + diphosphate. It functions in the pathway cofactor biosynthesis; coenzyme A biosynthesis; CoA from (R)-pantothenate: step 4/5. Its function is as follows. Reversibly transfers an adenylyl group from ATP to 4'-phosphopantetheine, yielding dephospho-CoA (dPCoA) and pyrophosphate. The protein is Phosphopantetheine adenylyltransferase of Xanthomonas campestris pv. campestris (strain B100).